Reading from the N-terminus, the 106-residue chain is UPF0091 protein RC0354 (106 aa).

It belongs to the UPF0091 family.

This chain is UPF0091 protein RC0354, found in Rickettsia conorii (strain ATCC VR-613 / Malish 7).